A 286-amino-acid polypeptide reads, in one-letter code: Translocon-associated protein subunit alpha (286 aa).

The N-terminal stretch at 1–21 (MRLLPRLLLLLLLVFPATVLL) is a signal peptide. At 22-207 (RGGPGGSLAE…EREDGLDGQT (186 aa)) the chain is on the lumenal side. Positions 28-83 (SLAEAQDLSEDEETVEDSVIEDEDDEAEVEEDEPTDLAEDREEEDVSGEPEASPSA) are disordered. Residues 34 to 75 (DLSEDEETVEDSVIEDEDDEAEVEEDEPTDLAEDREEEDVSG) show a composition bias toward acidic residues. N-linked (GlcNAc...) asparagine glycans are attached at residues N136 and N191. A helical transmembrane segment spans residues 208 to 228 (IFMYMSLAGLGLLVVVGLHQL). Over 229–286 (LESRNRKRPIQKVEMGTSSQNDVDMSWIPQETLNQINKASPRRLPRKRPQKRSVGSDE) the chain is Cytoplasmic. Residue S247 is modified to Phosphoserine. T260 carries the post-translational modification Phosphothreonine. Residues 264 to 286 (INKASPRRLPRKRPQKRSVGSDE) form a disordered region. S268 bears the Phosphoserine mark. Residues 268-279 (SPRRLPRKRPQK) are compositionally biased toward basic residues.

This sequence belongs to the TRAP-alpha family. Heterotetramer of TRAP-alpha, TRAP-beta, TRAP-delta and TRAP-gamma. Interacts with palmitoylated calnexin (CALX), the interaction is required for efficient folding of glycosylated proteins. In terms of processing, phosphorylated in its cytoplasmic tail.

Its subcellular location is the endoplasmic reticulum membrane. In terms of biological role, TRAP proteins are part of a complex whose function is to bind calcium to the ER membrane and thereby regulate the retention of ER resident proteins. May be involved in the recycling of the translocation apparatus after completion of the translocation process or may function as a membrane-bound chaperone facilitating folding of translocated proteins. This Oryctolagus cuniculus (Rabbit) protein is Translocon-associated protein subunit alpha (SSR1).